A 680-amino-acid polypeptide reads, in one-letter code: Tripartite terminase subunit 1 (680 aa).

The segment at 180–208 (CLECVLETSVVPNQGETLNELLLNHNCHH) adopts a C3H1-type zinc-finger fold. 610–617 (YNITWEKN) contributes to the ATP binding site.

This sequence belongs to the herpesviridae TRM1 protein family. Associates with TRM2 and TRM3 to form the tripartite terminase complex. Interacts with portal protein.

It localises to the host nucleus. Functionally, component of the molecular motor that translocates viral genomic DNA in empty capsid during DNA packaging. Forms a tripartite terminase complex together with TRM2 and TRM3 in the host cytoplasm. Once the complex reaches the host nucleus, it interacts with the capsid portal vertex. This portal forms a ring in which genomic DNA is translocated into the capsid. TRM1 carries an endonuclease activity that plays an important role for the cleavage of concatemeric viral DNA into unit length genomes. The polypeptide is Tripartite terminase subunit 1 (Alcelaphine herpesvirus 1 (strain C500) (AlHV-1)).